Reading from the N-terminus, the 219-residue chain is MKKLVVIYSGGMDSFTALNKAVKEGFDVYALSFDYGQKHNKELIYAQNVCNELNVPHKILDIKSISTLFTSSSLVSDDINVPDGHYEADNMKSTVVPNRNMILISLAIGYAVDIEAEGVWYGAHSGDHLIYPDCRPEFVKVMDQASKVANFEPVYVHAPYLNTDKIGILKDGIKMGLDYSKTWTCYQGKEKACGTCGSCVERLEAFQANNIDDPVQYSI.

Position 8–18 (8–18 (YSGGMDSFTAL)) interacts with ATP. Residues C185, C193, C196, and C199 each coordinate Zn(2+).

It belongs to the QueC family. Requires Zn(2+) as cofactor.

The catalysed reaction is 7-carboxy-7-deazaguanine + NH4(+) + ATP = 7-cyano-7-deazaguanine + ADP + phosphate + H2O + H(+). Its pathway is purine metabolism; 7-cyano-7-deazaguanine biosynthesis. In terms of biological role, catalyzes the ATP-dependent conversion of 7-carboxy-7-deazaguanine (CDG) to 7-cyano-7-deazaguanine (preQ(0)). The protein is 7-cyano-7-deazaguanine synthase 2 of Colwellia psychrerythraea (strain 34H / ATCC BAA-681) (Vibrio psychroerythus).